Consider the following 630-residue polypeptide: tRNA uridine 5-carboxymethylaminomethyl modification enzyme MnmG (630 aa).

13–18 (GGGHAG) lines the FAD pocket. Position 273 to 287 (273 to 287 (GPRYCPSIEDKIHRF)) interacts with NAD(+).

This sequence belongs to the MnmG family. As to quaternary structure, homodimer. Heterotetramer of two MnmE and two MnmG subunits. It depends on FAD as a cofactor.

The protein localises to the cytoplasm. Functionally, NAD-binding protein involved in the addition of a carboxymethylaminomethyl (cmnm) group at the wobble position (U34) of certain tRNAs, forming tRNA-cmnm(5)s(2)U34. The chain is tRNA uridine 5-carboxymethylaminomethyl modification enzyme MnmG from Pseudomonas aeruginosa (strain LESB58).